Reading from the N-terminus, the 212-residue chain is Guanylate kinase (212 aa).

The Guanylate kinase-like domain maps to 14–192 (GTALVICAPS…AYDELRATYL (179 aa)). 21 to 28 (APSGTGKT) contacts ATP.

Belongs to the guanylate kinase family.

Its subcellular location is the cytoplasm. The catalysed reaction is GMP + ATP = GDP + ADP. Functionally, essential for recycling GMP and indirectly, cGMP. The polypeptide is Guanylate kinase (Lawsonia intracellularis (strain PHE/MN1-00)).